The chain runs to 301 residues: Quinolinate synthase (301 aa).

Histidine 21 and serine 38 together coordinate iminosuccinate. Cysteine 83 serves as a coordination point for [4Fe-4S] cluster. Iminosuccinate contacts are provided by residues 109-111 (YIN) and serine 126. Cysteine 169 serves as a coordination point for [4Fe-4S] cluster. Residues 195 to 197 (HPE) and threonine 212 each bind iminosuccinate. Cysteine 257 lines the [4Fe-4S] cluster pocket.

This sequence belongs to the quinolinate synthase family. Type 2 subfamily. It depends on [4Fe-4S] cluster as a cofactor.

It localises to the cytoplasm. The catalysed reaction is iminosuccinate + dihydroxyacetone phosphate = quinolinate + phosphate + 2 H2O + H(+). It participates in cofactor biosynthesis; NAD(+) biosynthesis; quinolinate from iminoaspartate: step 1/1. Catalyzes the condensation of iminoaspartate with dihydroxyacetone phosphate to form quinolinate. The sequence is that of Quinolinate synthase from Clostridium perfringens (strain SM101 / Type A).